Here is a 222-residue protein sequence, read N- to C-terminus: uncharacterized protein (222 aa).

Residues 1–20 (MRTTSFAKVAALCGLLALSG) form the signal peptide. Cys-21 carries the N-palmitoyl cysteine lipid modification. The S-diacylglycerol cysteine moiety is linked to residue Cys-21.

Its subcellular location is the cell membrane. This is an uncharacterized protein from Escherichia coli O157:H7.